The primary structure comprises 153 residues: 6,7-dimethyl-8-ribityllumazine synthase (153 aa).

Residues phenylalanine 22, 56–58 (AFE), and 80–82 (TVI) each bind 5-amino-6-(D-ribitylamino)uracil. A (2S)-2-hydroxy-3-oxobutyl phosphate-binding site is contributed by 85–86 (AT). The active-site Proton donor is histidine 88. Phenylalanine 113 contributes to the 5-amino-6-(D-ribitylamino)uracil binding site. Position 127 (arginine 127) interacts with (2S)-2-hydroxy-3-oxobutyl phosphate.

Belongs to the DMRL synthase family.

It catalyses the reaction (2S)-2-hydroxy-3-oxobutyl phosphate + 5-amino-6-(D-ribitylamino)uracil = 6,7-dimethyl-8-(1-D-ribityl)lumazine + phosphate + 2 H2O + H(+). Its pathway is cofactor biosynthesis; riboflavin biosynthesis; riboflavin from 2-hydroxy-3-oxobutyl phosphate and 5-amino-6-(D-ribitylamino)uracil: step 1/2. Functionally, catalyzes the formation of 6,7-dimethyl-8-ribityllumazine by condensation of 5-amino-6-(D-ribitylamino)uracil with 3,4-dihydroxy-2-butanone 4-phosphate. This is the penultimate step in the biosynthesis of riboflavin. The sequence is that of 6,7-dimethyl-8-ribityllumazine synthase from Clostridium perfringens (strain 13 / Type A).